The chain runs to 760 residues: uncharacterized protein (760 aa).

Residues 1–20 (MKFKLFLGSSFFGVATLLIA) form the signal peptide. Cysteine 21 carries N-palmitoyl cysteine lipidation. Cysteine 21 carries the S-diacylglycerol cysteine lipid modification. Disordered regions lie at residues 221–243 (ENAANGTTEKAEKTVSASSLQLK), 272–315 (AKTN…TSDD), and 705–741 (IKATSKEGEQNQGKKGDGAQNQGKKGDGAQNGKNDKA). Residues 272–284 (AKTNGEKGNEKQE) are compositionally biased toward basic and acidic residues. Polar residues predominate over residues 300 to 312 (KNTSQDKTQNTQT). A compositionally biased stretch (basic and acidic residues) spans 705 to 721 (IKATSKEGEQNQGKKGD).

Belongs to the MG185/MG260 family.

It is found in the cell membrane. This is an uncharacterized protein from Mycoplasma pneumoniae (strain ATCC 29342 / M129 / Subtype 1) (Mycoplasmoides pneumoniae).